A 162-amino-acid chain; its full sequence is 2-C-methyl-D-erythritol 2,4-cyclodiphosphate synthase (162 aa).

Residues D8 and H10 each contribute to the a divalent metal cation site. Residues 8–10 (DVH) and 36–37 (HS) each bind 4-CDP-2-C-methyl-D-erythritol 2-phosphate. H44 contributes to the a divalent metal cation binding site. 4-CDP-2-C-methyl-D-erythritol 2-phosphate contacts are provided by residues 58–60 (DIG), 63–67 (FPDTD), 102–108 (AQAPKMA), 134–137 (TTTE), F141, and R144.

Belongs to the IspF family. As to quaternary structure, homotrimer. It depends on a divalent metal cation as a cofactor.

It catalyses the reaction 4-CDP-2-C-methyl-D-erythritol 2-phosphate = 2-C-methyl-D-erythritol 2,4-cyclic diphosphate + CMP. The protein operates within isoprenoid biosynthesis; isopentenyl diphosphate biosynthesis via DXP pathway; isopentenyl diphosphate from 1-deoxy-D-xylulose 5-phosphate: step 4/6. In terms of biological role, involved in the biosynthesis of isopentenyl diphosphate (IPP) and dimethylallyl diphosphate (DMAPP), two major building blocks of isoprenoid compounds. Catalyzes the conversion of 4-diphosphocytidyl-2-C-methyl-D-erythritol 2-phosphate (CDP-ME2P) to 2-C-methyl-D-erythritol 2,4-cyclodiphosphate (ME-CPP) with a corresponding release of cytidine 5-monophosphate (CMP). In Yersinia pseudotuberculosis serotype IB (strain PB1/+), this protein is 2-C-methyl-D-erythritol 2,4-cyclodiphosphate synthase.